The chain runs to 295 residues: NAD kinase (295 aa).

Asp-72 serves as the catalytic Proton acceptor. Residues Asp-72–Gly-73, Asn-146–Asp-147, Arg-157, Lys-174, Asp-176, Thr-187–Ser-192, and Gln-247 contribute to the NAD(+) site.

This sequence belongs to the NAD kinase family. The cofactor is a divalent metal cation.

It localises to the cytoplasm. The enzyme catalyses NAD(+) + ATP = ADP + NADP(+) + H(+). Its function is as follows. Involved in the regulation of the intracellular balance of NAD and NADP, and is a key enzyme in the biosynthesis of NADP. Catalyzes specifically the phosphorylation on 2'-hydroxyl of the adenosine moiety of NAD to yield NADP. The protein is NAD kinase of Azotobacter vinelandii (strain DJ / ATCC BAA-1303).